The chain runs to 771 residues: Tetratricopeptide repeat-containing protein trd-1 (771 aa).

TPR repeat units follow at residues 389 to 415 (LEMWDGVIDCYKQLGQMDKAETLIRRL), 416 to 449 (IEQKPNDSMLHVYLGDITRNLEYFTKAIELSDDR), 451 to 484 (ARAHRSLGHLLLMDKKFEEAYKHLRRSLELQPIQ), 485 to 518 (LGTWFNAGYCAWKLENFKESTQCYHRCVSLQPDH), 520 to 552 (EAWNNLSAAYIRHGQKPKAWKLLQEALKYNYEH), and 553 to 586 (PNVWENYMLLSVDVGEFSQAIQAYHRLLDMNKRG).

Belongs to the TTC27 family. Expressed in the spermatheca.

The protein localises to the cytoplasm. Functionally, developmental protein required for cell fate determination in both the germline and seam cells of the developing epidermis. Specifically, involved in sex determination and may function in parallel or downstream of other sex determination factors, including tra-2 and fem-3, to promote oogenesis in its role in the regulation of the switch from spermatogenesis to oogenesis in the gonads. Also implicated in the mitosis to meiosis switch in distal tip cells. The sequence is that of Tetratricopeptide repeat-containing protein trd-1 from Caenorhabditis elegans.